We begin with the raw amino-acid sequence, 425 residues long: Enolase (425 aa).

The tract at residues 31–54 (TGSAIVPSGASTGEKEAVELRDSD) is disordered. Positions 43-54 (GEKEAVELRDSD) are enriched in basic and acidic residues. A (2R)-2-phosphoglycerate-binding site is contributed by Q162. The active-site Proton donor is the E204. Positions 241, 285, and 312 each coordinate Mg(2+). K337, R366, S367, and K388 together coordinate (2R)-2-phosphoglycerate. K337 (proton acceptor) is an active-site residue.

Belongs to the enolase family. Mg(2+) is required as a cofactor.

It is found in the cytoplasm. It localises to the secreted. Its subcellular location is the cell surface. The enzyme catalyses (2R)-2-phosphoglycerate = phosphoenolpyruvate + H2O. It participates in carbohydrate degradation; glycolysis; pyruvate from D-glyceraldehyde 3-phosphate: step 4/5. Its function is as follows. Catalyzes the reversible conversion of 2-phosphoglycerate (2-PG) into phosphoenolpyruvate (PEP). It is essential for the degradation of carbohydrates via glycolysis. The protein is Enolase of Gloeobacter violaceus (strain ATCC 29082 / PCC 7421).